A 135-amino-acid polypeptide reads, in one-letter code: Protein PsiE homolog (135 aa).

A run of 4 helical transmembrane segments spans residues valine 20–leucine 40, tyrosine 54–valine 74, histidine 82–valine 102, and proline 107–alanine 127.

It belongs to the PsiE family.

It localises to the cell inner membrane. This Yersinia enterocolitica serotype O:8 / biotype 1B (strain NCTC 13174 / 8081) protein is Protein PsiE homolog.